The sequence spans 357 residues: Tribbles homolog 3 (357 aa).

Residues Met-1–Thr-63 form a disordered region. Residues Met-1–Leu-127 are interaction with DDIT3/CHOP. The region spanning Leu-68 to Arg-316 is the Protein kinase domain. The disordered stretch occupies residues Asp-333–Gly-357. The segment covering Gly-341–Glu-350 has biased composition (acidic residues).

This sequence belongs to the protein kinase superfamily. CAMK Ser/Thr protein kinase family. Tribbles subfamily. In terms of assembly, interacts with AKT1, AKT2, MAP2K1 and MAP2K7. Interacts with ATF4. Interacts with DDIT3/CHOP and inhibits its interaction with EP300/P300. Interacts with APOBEC3C. Interacts (via N-terminus) with APOBEC3A. Interacts with RELA.

Its subcellular location is the nucleus. In terms of biological role, inactive protein kinase which acts as a regulator of the integrated stress response (ISR), a process for adaptation to various stress. Inhibits the transcriptional activity of DDIT3/CHOP and is involved in DDIT3/CHOP-dependent cell death during ER stress. May play a role in programmed neuronal cell death but does not appear to affect non-neuronal cells. Acts as a negative feedback regulator of the ATF4-dependent transcription during the ISR: while TRIB3 expression is promoted by ATF4, TRIB3 protein interacts with ATF4 and inhibits ATF4 transcription activity. Disrupts insulin signaling by binding directly to Akt kinases and blocking their activation. May bind directly to and mask the 'Thr-308' phosphorylation site in AKT1. Interacts with the NF-kappa-B transactivator p65 RELA and inhibits its phosphorylation and thus its transcriptional activation activity. Interacts with MAPK kinases and regulates activation of MAP kinases. Can inhibit APOBEC3A editing of nuclear DNA. The sequence is that of Tribbles homolog 3 (TRIB3) from Bos taurus (Bovine).